Consider the following 489-residue polypeptide: Putative general secretion pathway protein A (489 aa).

26-33 (GEAGSGKT) is an ATP binding site. The helical transmembrane segment at 237–257 (MQLAVVMSGTIIALTCGWLLL) threads the bilayer.

This sequence belongs to the ExeA family.

It is found in the cell membrane. Its function is as follows. May play a regulatory role under conditions of derepressed gsp gene expression. The polypeptide is Putative general secretion pathway protein A (gspA) (Escherichia coli (strain K12)).